Here is a 437-residue protein sequence, read N- to C-terminus: Adenylosuccinate synthetase (437 aa).

Residues 12-18 (GDEGKGK) and 40-42 (GHT) contribute to the GTP site. D13 serves as the catalytic Proton acceptor. Residues D13 and G40 each coordinate Mg(2+). IMP contacts are provided by residues 13–16 (DEGK), 38–41 (NAGH), T128, R142, Q223, T238, and R302. The active-site Proton donor is H41. A substrate-binding site is contributed by 298–304 (TTTGRRR). Residues R304, 330–332 (KLD), and 412–414 (SLG) each bind GTP.

It belongs to the adenylosuccinate synthetase family. In terms of assembly, homodimer. Mg(2+) is required as a cofactor.

It localises to the cytoplasm. The enzyme catalyses IMP + L-aspartate + GTP = N(6)-(1,2-dicarboxyethyl)-AMP + GDP + phosphate + 2 H(+). Its pathway is purine metabolism; AMP biosynthesis via de novo pathway; AMP from IMP: step 1/2. Its function is as follows. Plays an important role in the de novo pathway of purine nucleotide biosynthesis. Catalyzes the first committed step in the biosynthesis of AMP from IMP. In Parasynechococcus marenigrum (strain WH8102), this protein is Adenylosuccinate synthetase.